Reading from the N-terminus, the 356-residue chain is UDP-N-acetylglucosamine--N-acetylmuramyl-(pentapeptide) pyrophosphoryl-undecaprenol N-acetylglucosamine transferase (356 aa).

UDP-N-acetyl-alpha-D-glucosamine-binding residues include serine 195 and glutamine 287.

This sequence belongs to the glycosyltransferase 28 family. MurG subfamily.

It is found in the cell membrane. It catalyses the reaction Mur2Ac(oyl-L-Ala-gamma-D-Glu-L-Lys-D-Ala-D-Ala)-di-trans,octa-cis-undecaprenyl diphosphate + UDP-N-acetyl-alpha-D-glucosamine = beta-D-GlcNAc-(1-&gt;4)-Mur2Ac(oyl-L-Ala-gamma-D-Glu-L-Lys-D-Ala-D-Ala)-di-trans,octa-cis-undecaprenyl diphosphate + UDP + H(+). The protein operates within cell wall biogenesis; peptidoglycan biosynthesis. Cell wall formation. Catalyzes the transfer of a GlcNAc subunit on undecaprenyl-pyrophosphoryl-MurNAc-pentapeptide (lipid intermediate I) to form undecaprenyl-pyrophosphoryl-MurNAc-(pentapeptide)GlcNAc (lipid intermediate II). This chain is UDP-N-acetylglucosamine--N-acetylmuramyl-(pentapeptide) pyrophosphoryl-undecaprenol N-acetylglucosamine transferase, found in Streptococcus gordonii (strain Challis / ATCC 35105 / BCRC 15272 / CH1 / DL1 / V288).